The sequence spans 223 residues: Small ribosomal subunit protein uS3 (223 aa).

The KH type-2 domain maps to 39 to 108 (IRKFVKKKGA…VILINIVEVK (70 aa)).

This sequence belongs to the universal ribosomal protein uS3 family. Part of the 30S ribosomal subunit. Forms a tight complex with proteins S10 and S14.

Binds the lower part of the 30S subunit head. Binds mRNA in the 70S ribosome, positioning it for translation. This Clostridium kluyveri (strain NBRC 12016) protein is Small ribosomal subunit protein uS3.